The primary structure comprises 238 residues: Valine-rich protein (238 aa).

Residues 1-16 (MQAVLLVVALFGAALA) form the signal peptide.

Prismatic layer of shell (at protein level). Expressed primarily in the mantle with highest level in the mantle edge and lower level in the mantle pallium.

It is found in the secreted. The chain is Valine-rich protein from Margaritifera margaritifera (Freshwater pearl mussel).